The following is a 390-amino-acid chain: Neutrophil cytosol factor 1 (390 aa).

In terms of domain architecture, PX spans 4-125 (TFIRHIALLG…DFFKVRPDDL (122 aa)). SH3 domains are found at residues 156–215 (IILQ…PLDS) and 226–285 (YAGE…KSGQ). A disordered region spans residues 285 to 390 (QDVSQAQRQI…STKRKLASAV (106 aa)). A phosphoserine mark is found at Ser303 and Ser304. The span at 309-318 (HSIHQRSRKR) shows a compositional bias: basic residues. Residues Ser320, Ser328, Ser345, and Ser348 each carry the phosphoserine modification.

In terms of assembly, component of the phagocyte NADPH oxidase complex composed of an obligatory core heterodimer formed by the membrane proteins CYBA and CYBB and the cytosolic regulatory subunits NCF1/p47-phox, NCF2/p67-phox, NCF4/p40-phox and the small GTPase RAC1 or RAC2. Part of a cytosolic complex composed at least by NCF1, NCF2 and NCF4. Interacts (via C-terminus) with NCF2 (via the C-terminal SH3 domain). Interacts with NCF4. Interacts with CYBB. Interacts (via the second SH3 domain) with CYBA; interaction is phosphorylation-dependent. Interacts with NOXA1. Interacts with ADAM15. Interacts with TRAF4. Interacts with FASLG. Interacts with PARK7 (via C-terminus); the interaction is enhanced by LPS and modulates NCF1 phosphorylation and membrane translocation. In terms of processing, phosphorylated by PRKCD; phosphorylation induces activation of NCF1, leading to assembly and activation of the NADPH oxidase complex. As to expression, detected in peripheral blood monocytes and neutrophils (at protein level).

It localises to the cytoplasm. Its subcellular location is the cytosol. The protein localises to the membrane. Subunit of the phagocyte NADPH oxidase complex that mediates the transfer of electrons from cytosolic NADPH to O2 to produce the superoxide anion (O2(-)). In the activated complex, electrons are first transferred from NADPH to flavin adenine dinucleotide (FAD) and subsequently transferred via two heme molecules to molecular oxygen, producing superoxide through an outer-sphere reaction. Activation of the NADPH oxidase complex is initiated by the assembly of cytosolic subunits of the NADPH oxidase complex with the core NADPH oxidase complex to form a complex at the plasma membrane or phagosomal membrane. This activation process is initiated by phosphorylation dependent binding of the cytosolic NCF1/p47-phox subunit to the C-terminus of CYBA/p22-phox. The sequence is that of Neutrophil cytosol factor 1 from Homo sapiens (Human).